Here is a 191-residue protein sequence, read N- to C-terminus: GDP-mannose pyrophosphatase (191 aa).

GDP-alpha-D-mannose contacts are provided by residues tyrosine 17, 38 to 40 (KRE), arginine 67, and 85 to 87 (AGL). One can recognise a Nudix hydrolase domain in the interval 43-180 (DRGNGATILL…EIRDGKTVLL (138 aa)). Residues alanine 85, glutamate 100, and glutamate 104 each contribute to the Mg(2+) site. The short motif at 86-106 (GLLDNDEPEVCIRKEAIEETG) is the Nudix box element. GDP-alpha-D-mannose is bound by residues glutamate 104, glutamate 127, 150 to 151 (DE), and lysine 176. A Mg(2+)-binding site is contributed by glutamate 151.

It belongs to the Nudix hydrolase family. NudK subfamily. Homodimer. Mg(2+) is required as a cofactor.

It catalyses the reaction GDP-alpha-D-mannose + H2O = alpha-D-mannose 1-phosphate + GMP + 2 H(+). In terms of biological role, nucleoside diphosphate sugar hydrolase that hydrolyzes GDP-mannose as its preferred substrate, yielding GMP and mannose-1-phosphate. The polypeptide is GDP-mannose pyrophosphatase (nudK) (Escherichia coli (strain UTI89 / UPEC)).